The primary structure comprises 183 residues: UPF0397 protein EF_2154 (183 aa).

The next 5 membrane-spanning stretches (helical) occupy residues 10 to 30 (IVAI…VVIP), 44 to 64 (FLAL…GLIG), 74 to 94 (GSAW…FGFA), 115 to 135 (IFQA…LDIL), and 147 to 167 (QGVF…TLLM).

This sequence belongs to the UPF0397 family.

It is found in the cell membrane. This is UPF0397 protein EF_2154 from Enterococcus faecalis (strain ATCC 700802 / V583).